Reading from the N-terminus, the 132-residue chain is Small ribosomal subunit protein uS8 (132 aa).

The protein belongs to the universal ribosomal protein uS8 family. Part of the 30S ribosomal subunit. Contacts proteins S5 and S12.

Its function is as follows. One of the primary rRNA binding proteins, it binds directly to 16S rRNA central domain where it helps coordinate assembly of the platform of the 30S subunit. The chain is Small ribosomal subunit protein uS8 from Bartonella quintana (strain Toulouse) (Rochalimaea quintana).